A 316-amino-acid polypeptide reads, in one-letter code: Ribosomal RNA small subunit methyltransferase H (316 aa).

S-adenosyl-L-methionine contacts are provided by residues 35–37, Asp-55, Phe-79, Asp-101, and Gln-108; that span reads GGH.

Belongs to the methyltransferase superfamily. RsmH family.

It is found in the cytoplasm. The catalysed reaction is cytidine(1402) in 16S rRNA + S-adenosyl-L-methionine = N(4)-methylcytidine(1402) in 16S rRNA + S-adenosyl-L-homocysteine + H(+). Specifically methylates the N4 position of cytidine in position 1402 (C1402) of 16S rRNA. The polypeptide is Ribosomal RNA small subunit methyltransferase H (Aliivibrio fischeri (strain ATCC 700601 / ES114) (Vibrio fischeri)).